The primary structure comprises 244 residues: 5-oxoprolinase subunit A (244 aa).

It belongs to the LamB/PxpA family. As to quaternary structure, forms a complex composed of PxpA, PxpB and PxpC.

The enzyme catalyses 5-oxo-L-proline + ATP + 2 H2O = L-glutamate + ADP + phosphate + H(+). Functionally, catalyzes the cleavage of 5-oxoproline to form L-glutamate coupled to the hydrolysis of ATP to ADP and inorganic phosphate. In Salmonella schwarzengrund (strain CVM19633), this protein is 5-oxoprolinase subunit A.